Reading from the N-terminus, the 165-residue chain is Phosphopantetheine adenylyltransferase (165 aa).

Ser-8 serves as a coordination point for substrate. ATP-binding positions include 8–9 (SF) and His-16. Substrate contacts are provided by Lys-40, Thr-72, and Arg-86. Residues 87 to 89 (GLR), Glu-97, and 122 to 128 (YSFLSSS) contribute to the ATP site.

The protein belongs to the bacterial CoaD family. As to quaternary structure, homohexamer. Mg(2+) is required as a cofactor.

The protein localises to the cytoplasm. The catalysed reaction is (R)-4'-phosphopantetheine + ATP + H(+) = 3'-dephospho-CoA + diphosphate. The protein operates within cofactor biosynthesis; coenzyme A biosynthesis; CoA from (R)-pantothenate: step 4/5. Functionally, reversibly transfers an adenylyl group from ATP to 4'-phosphopantetheine, yielding dephospho-CoA (dPCoA) and pyrophosphate. This chain is Phosphopantetheine adenylyltransferase, found in Synechococcus sp. (strain WH7803).